The chain runs to 346 residues: tRNA N6-adenosine threonylcarbamoyltransferase (346 aa).

2 residues coordinate Fe cation: His110 and His114. Residues 132–136, Asp165, Gly178, and Asn274 contribute to the substrate site; that span reads LLSGG. Asp298 is a Fe cation binding site.

The protein belongs to the KAE1 / TsaD family. Fe(2+) is required as a cofactor.

The protein localises to the cytoplasm. It carries out the reaction L-threonylcarbamoyladenylate + adenosine(37) in tRNA = N(6)-L-threonylcarbamoyladenosine(37) in tRNA + AMP + H(+). Its function is as follows. Required for the formation of a threonylcarbamoyl group on adenosine at position 37 (t(6)A37) in tRNAs that read codons beginning with adenine. Is involved in the transfer of the threonylcarbamoyl moiety of threonylcarbamoyl-AMP (TC-AMP) to the N6 group of A37, together with TsaE and TsaB. TsaD likely plays a direct catalytic role in this reaction. This is tRNA N6-adenosine threonylcarbamoyltransferase from Borreliella burgdorferi (strain ZS7) (Borrelia burgdorferi).